Consider the following 63-residue polypeptide: Large ribosomal subunit protein eL24 (63 aa).

Residues C7, C10, C33, and C37 each coordinate Zn(2+). The C4-type zinc finger occupies 7–37 (CSFCGGSIEPGTGLMYVLRNGQILWFCSSKC).

The protein belongs to the eukaryotic ribosomal protein eL24 family. Part of the 50S ribosomal subunit. Forms a cluster with proteins L3 and L14. The cofactor is Zn(2+).

Functionally, binds to the 23S rRNA. The polypeptide is Large ribosomal subunit protein eL24 (Aeropyrum pernix (strain ATCC 700893 / DSM 11879 / JCM 9820 / NBRC 100138 / K1)).